The sequence spans 506 residues: Histidine ammonia-lyase (506 aa).

The segment at residues 143 to 145 (ASG) is a cross-link (5-imidazolinone (Ala-Gly)). Ser144 carries the 2,3-didehydroalanine (Ser) modification.

This sequence belongs to the PAL/histidase family. In terms of processing, contains an active site 4-methylidene-imidazol-5-one (MIO), which is formed autocatalytically by cyclization and dehydration of residues Ala-Ser-Gly.

It is found in the cytoplasm. The catalysed reaction is L-histidine = trans-urocanate + NH4(+). It functions in the pathway amino-acid degradation; L-histidine degradation into L-glutamate; N-formimidoyl-L-glutamate from L-histidine: step 1/3. The chain is Histidine ammonia-lyase from Salmonella dublin (strain CT_02021853).